Here is a 149-residue protein sequence, read N- to C-terminus: 3-dehydroquinate dehydratase (149 aa).

Residue Tyr-26 is the Proton acceptor of the active site. Asn-77, His-83, and Asp-90 together coordinate substrate. His-103 acts as the Proton donor in catalysis. Residues 104–105 (LS) and Arg-114 contribute to the substrate site.

The protein belongs to the type-II 3-dehydroquinase family. As to quaternary structure, homododecamer.

The enzyme catalyses 3-dehydroquinate = 3-dehydroshikimate + H2O. The protein operates within metabolic intermediate biosynthesis; chorismate biosynthesis; chorismate from D-erythrose 4-phosphate and phosphoenolpyruvate: step 3/7. Catalyzes a trans-dehydration via an enolate intermediate. This chain is 3-dehydroquinate dehydratase, found in Vibrio parahaemolyticus serotype O3:K6 (strain RIMD 2210633).